The sequence spans 311 residues: tRNA-cytidine(32) 2-sulfurtransferase (311 aa).

Residues 47–52 carry the PP-loop motif motif; sequence SGGKDS. Residues cysteine 122, cysteine 125, and cysteine 213 each contribute to the [4Fe-4S] cluster site.

Belongs to the TtcA family. As to quaternary structure, homodimer. It depends on Mg(2+) as a cofactor. [4Fe-4S] cluster serves as cofactor.

The protein localises to the cytoplasm. The enzyme catalyses cytidine(32) in tRNA + S-sulfanyl-L-cysteinyl-[cysteine desulfurase] + AH2 + ATP = 2-thiocytidine(32) in tRNA + L-cysteinyl-[cysteine desulfurase] + A + AMP + diphosphate + H(+). It participates in tRNA modification. Functionally, catalyzes the ATP-dependent 2-thiolation of cytidine in position 32 of tRNA, to form 2-thiocytidine (s(2)C32). The sulfur atoms are provided by the cysteine/cysteine desulfurase (IscS) system. This chain is tRNA-cytidine(32) 2-sulfurtransferase, found in Shigella boydii serotype 4 (strain Sb227).